Here is a 132-residue protein sequence, read N- to C-terminus: Small ribosomal subunit protein uS8 (132 aa).

This sequence belongs to the universal ribosomal protein uS8 family. As to quaternary structure, part of the 30S ribosomal subunit. Contacts proteins S5 and S12.

In terms of biological role, one of the primary rRNA binding proteins, it binds directly to 16S rRNA central domain where it helps coordinate assembly of the platform of the 30S subunit. The polypeptide is Small ribosomal subunit protein uS8 (Caulobacter sp. (strain K31)).